The primary structure comprises 270 residues: Tryptophan 2,3-dioxygenase-like protein (270 aa).

The protein belongs to the tryptophan 2,3-dioxygenase family.

This is Tryptophan 2,3-dioxygenase-like protein from Xanthomonas campestris pv. campestris (strain 8004).